The chain runs to 795 residues: Levansucrase (795 aa).

Residues 1 to 36 (METKVRKKMYKKGKFWVVATITTAMLTGIGLSSVQA) form the signal peptide. 2 stretches are compositionally biased toward polar residues: residues 42 to 66 (TQVSSELAERSQVQENTTASSSAAE) and 112 to 130 (QAATVTKTSASTPEVGQTN). Disordered regions lie at residues 42 to 83 (TQVS…NPAA) and 103 to 138 (ESKASKTKDQAATVTKTSASTPEVGQTNEKAKATKE). Sucrose contacts are provided by tryptophan 245, aspartate 246, and serine 315. The active-site Nucleophile is the aspartate 246. Residue aspartate 394 coordinates Ca(2+). 2 residues coordinate sucrose: arginine 399 and aspartate 400. Positions 425, 464, and 496 each coordinate Ca(2+). Sucrose is bound at residue glutamate 497. Catalysis depends on glutamate 499, which acts as the Proton donor/acceptor. Arginine 517 is a binding site for sucrose. A helical membrane pass occupies residues 774-794 (GNSFFAALLALFSAFCVSIGF).

It belongs to the glycosyl hydrolase 68 family.

Its subcellular location is the cell membrane. The protein localises to the cell surface. It carries out the reaction [6)-beta-D-fructofuranosyl-(2-&gt;](n) alpha-D-glucopyranoside + sucrose = [6)-beta-D-fructofuranosyl-(2-&gt;](n+1) alpha-D-glucopyranoside + D-glucose. Its activity is regulated as follows. Ca(2+) may play an important structural role and promote stability of levansucrase. Functionally, catalyzes the synthesis of levan, a fructose polymer, by transferring the fructosyl moiety from sucrose to a growing acceptor molecule. Also displays sucrose hydrolase activity. This Streptococcus mutans serotype c (strain ATCC 700610 / UA159) protein is Levansucrase.